The following is a 56-amino-acid chain: U-megalopygitoxin(2)-Mo9 (56 aa).

The N-terminal stretch at 1–25 (MKFIVLLLIVTSVLMMFAVTTEASP) is a signal peptide. Gln26 is modified (pyrrolidone carboxylic acid). Thr55 carries the post-translational modification Threonine amide.

This sequence belongs to the caterpillar 2 family. Post-translationally, contains 2 disulfide bonds. In terms of tissue distribution, expressed by the venom apparatus.

It is found in the secreted. Its function is as follows. Probable toxin. This chain is U-megalopygitoxin(2)-Mo9, found in Megalopyge opercularis (Southern flannel moth).